Here is a 211-residue protein sequence, read N- to C-terminus: FMN-dependent NADH:quinone oxidoreductase 2 (211 aa).

17–19 (SYS) contributes to the FMN binding site.

Belongs to the azoreductase type 1 family. Homodimer. FMN serves as cofactor.

It catalyses the reaction 2 a quinone + NADH + H(+) = 2 a 1,4-benzosemiquinone + NAD(+). It carries out the reaction N,N-dimethyl-1,4-phenylenediamine + anthranilate + 2 NAD(+) = 2-(4-dimethylaminophenyl)diazenylbenzoate + 2 NADH + 2 H(+). In terms of biological role, quinone reductase that provides resistance to thiol-specific stress caused by electrophilic quinones. Also exhibits azoreductase activity. Catalyzes the reductive cleavage of the azo bond in aromatic azo compounds to the corresponding amines. The sequence is that of FMN-dependent NADH:quinone oxidoreductase 2 from Bacillus licheniformis (strain ATCC 14580 / DSM 13 / JCM 2505 / CCUG 7422 / NBRC 12200 / NCIMB 9375 / NCTC 10341 / NRRL NRS-1264 / Gibson 46).